The primary structure comprises 329 residues: tRNA(Ile)-lysidine synthase, chloroplastic (329 aa).

32–37 (SGGQDS) contributes to the ATP binding site.

It belongs to the tRNA(Ile)-lysidine synthase family.

The protein localises to the plastid. It localises to the chloroplast. It carries out the reaction cytidine(34) in tRNA(Ile2) + L-lysine + ATP = lysidine(34) in tRNA(Ile2) + AMP + diphosphate + H(+). Functionally, ligates lysine onto the cytidine present at position 34 of the AUA codon-specific tRNA(Ile) that contains the anticodon CAU, in an ATP-dependent manner. Cytidine is converted to lysidine, thus changing the amino acid specificity of the tRNA from methionine to isoleucine. This Pyropia yezoensis (Susabi-nori) protein is tRNA(Ile)-lysidine synthase, chloroplastic.